Reading from the N-terminus, the 444-residue chain is Argininosuccinate synthase (444 aa).

Residues 17-25 (AFSGGLDTS) and Ala43 each bind ATP. Tyr99 provides a ligand contact to L-citrulline. Gly129 and Thr131 together coordinate ATP. L-aspartate is bound by residues Thr131, Asn135, and Asp136. Asn135 is a binding site for L-citrulline. Asp136 contacts ATP. L-citrulline is bound by residues Arg139 and Ser192. Residue Asp194 coordinates ATP. The L-citrulline site is built by Thr201, Glu203, and Glu280.

The protein belongs to the argininosuccinate synthase family. Type 2 subfamily. Homotetramer.

Its subcellular location is the cytoplasm. It carries out the reaction L-citrulline + L-aspartate + ATP = 2-(N(omega)-L-arginino)succinate + AMP + diphosphate + H(+). The protein operates within amino-acid biosynthesis; L-arginine biosynthesis; L-arginine from L-ornithine and carbamoyl phosphate: step 2/3. This Delftia acidovorans (strain DSM 14801 / SPH-1) protein is Argininosuccinate synthase.